The chain runs to 422 residues: Glutamyl-tRNA reductase (422 aa).

Residues 49–52 (TCNR), Ser-107, 112–114 (EPQ), and Gln-118 each bind substrate. The active-site Nucleophile is Cys-50. Residue 187–192 (GAGETI) participates in NADP(+) binding.

This sequence belongs to the glutamyl-tRNA reductase family. Homodimer.

It carries out the reaction (S)-4-amino-5-oxopentanoate + tRNA(Glu) + NADP(+) = L-glutamyl-tRNA(Glu) + NADPH + H(+). It participates in porphyrin-containing compound metabolism; protoporphyrin-IX biosynthesis; 5-aminolevulinate from L-glutamyl-tRNA(Glu): step 1/2. Its function is as follows. Catalyzes the NADPH-dependent reduction of glutamyl-tRNA(Glu) to glutamate 1-semialdehyde (GSA). This Stutzerimonas stutzeri (strain A1501) (Pseudomonas stutzeri) protein is Glutamyl-tRNA reductase.